Here is a 256-residue protein sequence, read N- to C-terminus: Large ribosomal subunit protein bL21c (256 aa).

Residues 1–55 (MASATLAFSCSSLCATLKLPQNLNPLLLNVPPLSKPFSGVVSPPSLSRLSLLPVA) constitute a chloroplast transit peptide.

Component of the chloroplast large ribosomal subunit (LSU). Mature 70S chloroplast ribosomes of higher plants consist of a small (30S) and a large (50S) subunit. The 30S small subunit contains 1 molecule of ribosomal RNA (16S rRNA) and 24 different proteins. The 50S large subunit contains 3 rRNA molecules (23S, 5S and 4.5S rRNA) and 33 different proteins.

It localises to the plastid. The protein resides in the chloroplast. Its function is as follows. Component of the chloroplast ribosome (chloro-ribosome), a dedicated translation machinery responsible for the synthesis of chloroplast genome-encoded proteins, including proteins of the transcription and translation machinery and components of the photosynthetic apparatus. In Spinacia oleracea (Spinach), this protein is Large ribosomal subunit protein bL21c (RPL21).